Reading from the N-terminus, the 435-residue chain is Putative magnesium transporter MRS2-H (435 aa).

The segment at 19-54 (FSSSPESRRCRSVHRVPSRPRPPLAPPARVMGKGNS) is disordered. 2 helical membrane-spanning segments follow: residues 369 to 389 (LTLI…AAFA) and 408 to 428 (FVGA…TYAW).

The protein belongs to the CorA metal ion transporter (MIT) (TC 1.A.35.5) family.

It is found in the membrane. Its function is as follows. Putative magnesium transporter. This Oryza sativa subsp. indica (Rice) protein is Putative magnesium transporter MRS2-H (MRS2-H).